The chain runs to 831 residues: Protein translocase subunit SecA (831 aa).

Residues glutamine 88, 106–110, and aspartate 495 contribute to the ATP site; that span reads GEGKT. Residues cysteine 816, cysteine 818, cysteine 827, and cysteine 828 each coordinate Zn(2+).

Belongs to the SecA family. In terms of assembly, monomer and homodimer. Part of the essential Sec protein translocation apparatus which comprises SecA, SecYEG and auxiliary proteins SecDF-YajC and YidC. It depends on Zn(2+) as a cofactor.

It localises to the cell membrane. It is found in the cytoplasm. The enzyme catalyses ATP + H2O + cellular proteinSide 1 = ADP + phosphate + cellular proteinSide 2.. Functionally, part of the Sec protein translocase complex. Interacts with the SecYEG preprotein conducting channel. Has a central role in coupling the hydrolysis of ATP to the transfer of proteins into and across the cell membrane, serving as an ATP-driven molecular motor driving the stepwise translocation of polypeptide chains across the membrane. This chain is Protein translocase subunit SecA, found in Lawsonia intracellularis (strain PHE/MN1-00).